The chain runs to 129 residues: MARGLAVFFLLAGACLALAEDVVDKGVAKARVESCSGUQLNRYPGAKQFIQEDLPLFHNTKFQHIGGAAPELLLLNKQDQELERFDLKKLSREEINELMIKKGFYKKSSKDEQVPEEYQEGPYMEKEEL.

The N-terminal stretch at 1-19 (MARGLAVFFLLAGACLALA) is a signal peptide. Active-site nucleophile residues include C35 and U38. A non-standard amino acid (selenocysteine) is located at residue U38. Residues 107-129 (KSSKDEQVPEEYQEGPYMEKEEL) form a disordered region. The Prevents secretion from ER signature appears at 126–129 (KEEL).

This sequence belongs to the selenoprotein M/F family. As to expression, high expression levels observed in hepatopancreas, testis, ovaries and intestine. Also expressed in heart, stomach, gills, cranial ganglia, muscle and hematocytes.

It is found in the endoplasmic reticulum. Its function is as follows. May function as a thiol-disulfide oxidoreductase that participates in disulfide bond formation. Involved in the regulation of reproduction during the period of rapid gonadal development. This chain is Selenoprotein M, found in Eriocheir sinensis (Chinese mitten crab).